Consider the following 603-residue polypeptide: NADH-ubiquinone oxidoreductase chain 5 (603 aa).

16 helical membrane-spanning segments follow: residues 4–24 (YTTM…ATLI), 36–56 (VKMT…MFMC), 87–107 (MMFI…SLWY), 114–134 (INQF…LVTA), 137–157 (LFQL…LIGW), 171–191 (AILY…WFLL), 200–220 (QMIL…LLAA), 241–261 (TPVS…FLLI), 272–292 (LIQT…AICA), 301–320 (IVAF…IGIN), 325–347 (AFLH…GSII), 366–386 (LPLT…MPFL), 407–429 (WALS…MILL), 457–477 (LTIG…PTSP), 482–502 (IPLY…LTAF), and 583–603 (MIKL…LLIM).

It belongs to the complex I subunit 5 family. As to quaternary structure, core subunit of respiratory chain NADH dehydrogenase (Complex I) which is composed of 45 different subunits.

It localises to the mitochondrion inner membrane. The enzyme catalyses a ubiquinone + NADH + 5 H(+)(in) = a ubiquinol + NAD(+) + 4 H(+)(out). Core subunit of the mitochondrial membrane respiratory chain NADH dehydrogenase (Complex I) which catalyzes electron transfer from NADH through the respiratory chain, using ubiquinone as an electron acceptor. Essential for the catalytic activity and assembly of complex I. The chain is NADH-ubiquinone oxidoreductase chain 5 (MT-ND5) from Hylobates lar (Lar gibbon).